The sequence spans 358 residues: HLA class I histocompatibility antigen, alpha chain E (358 aa).

An N-terminal signal peptide occupies residues 1-21 (MVDGTLLLLLSEALALTQTWA). Residues 22–111 (GSHSLKYFHT…LRGYYNQSEA (90 aa)) are alpha-1. Topologically, residues 22 to 305 (GSHSLKYFHT…KPASQPTIPI (284 aa)) are extracellular. Positions 28, 84, 87, 98, and 105 each coordinate a peptide antigen. The N-linked (GlcNAc...) asparagine glycan is linked to N107. Residues 112-203 (GSHTLQWMHG…EKGKETLLHL (92 aa)) form an alpha-2 region. C122 and C185 are oxidised to a cystine. S164, K167, Q177, Y180, and Y192 together coordinate a peptide antigen. Residues 204–295 (EPPKTHVTHH…GLPEPVTLRW (92 aa)) are alpha-3. An Ig-like C1-type domain is found at 206 to 294 (PKTHVTHHPI…EGLPEPVTLR (89 aa)). A disulfide bridge connects residues C224 and C280. The tract at residues 296–305 (KPASQPTIPI) is connecting peptide. Residues 306 to 329 (VGIIAGLVLLGSVVSGAVVAAVIW) traverse the membrane as a helical segment. The Cytoplasmic segment spans residues 330-358 (RKKSSGGKGGSYSKAEWSDSAQGSESHSL). The segment at 333-358 (SSGGKGGSYSKAEWSDSAQGSESHSL) is disordered. The span at 348–358 (DSAQGSESHSL) shows a compositional bias: polar residues. The residue at position 353 (S353) is a Phosphoserine.

Belongs to the MHC class I family. As to quaternary structure, forms a heterotrimer with B2M and a self- or a pathogen-derived peptide (peptide-bound HLA-E-B2M). Similarly to MHC class Ia assembly, HLA-E-B2M heterodimer interacts with components of the antigen processing machinery TAPBP and TAP1-TAP2 complex; this interaction is required for peptide loading and translocation to the cell surface. Interacts with CALCR; this interaction is required for appropriate folding. The optimum binding peptide is a nonamer (VL9) that is primarily derived from amino-acid residues 3-11 of the signal sequences of most HLA-A, -B, -C and -G molecules. The VL9 peptide anchors to five main sites in the peptide-binding groove of HLA-E. Peptide-bound HLA-E-B2M complex interacts with KLRD1-KLRC1 receptor on NK cells. Binds with lower affinity to activating KLRD1-KLRC2. The common subunit KLRC1 plays a prominent role in directly interacting with HLA-E. Peptide-bound HLA-E-B2M interacts with the alpha-beta TCR on unconventional CD8+ T cells. Peptide-free HLA-E interacts with HLA-F-B2M complex; this interaction may regulate the intracellular trafficking and the stability of peptide-free MHC class I open conformers (OCs). N-glycosylated. Post-translationally, the soluble form (sHLA-E) can be partly produced by proteolytic cleavage at the cell surface (shedding) by a matrix metalloproteinase. Alternative splicing is also suggested as a mechanism for generation of sHLA-E, although it remains to be proved. As to expression, expressed in secretory endometrial cells during pregnancy (at protein level). The expression in nonlymphoid tissues is restricted to endothelial cells from all types of vessels, including arteries, veins, capillaries, and lymphatics (at protein level). In lymphoid organs, it is mainly expressed in endothelial venules, B and T cells, monocytes, macrophages, NK cells and megakaryocytes (at protein level).

It localises to the cell membrane. The protein resides in the golgi apparatus membrane. It is found in the secreted. Functionally, non-classical major histocompatibility class Ib molecule involved in immune self-nonself discrimination. In complex with B2M/beta-2-microglobulin binds nonamer self-peptides derived from the signal sequence of classical MHC class Ia molecules (VL9 peptides - VMAPRT[V/L][L/V/I/F]L). Peptide-bound HLA-E-B2M heterotrimeric complex primarily functions as a ligand for natural killer (NK) cell inhibitory receptor KLRD1-KLRC1, enabling NK cells to monitor the expression of other MHC class I molecules in healthy cells and to tolerate self. Upon cellular stress, preferentially binds signal sequence-derived peptides from stress-induced chaperones and is no longer recognized by NK cell inhibitory receptor KLRD1-KLRC1, resulting in impaired protection from NK cells. Binds signal sequence-derived peptides from non-classical MHC class Ib HLA-G molecules and acts as a ligand for NK cell activating receptor KLRD1-KLRC2, likely playing a role in the generation and effector functions of adaptive NK cells and in maternal-fetal tolerance during pregnancy. Besides self-peptides, can also bind and present pathogen-derived peptides conformationally similar to VL9 peptides to alpha-beta T cell receptor (TCR) on unconventional CD8-positive cytotoxic T cells, ultimately triggering antimicrobial immune response. Presents HIV gag peptides (immunodominant KAFSPEVIPMF and subdominant KALGPAATL epitopes) predominantly to CD8-positive T cell clones expressing a TRAV17-containing TCR, triggering HLA-E-restricted T cell responses. Presents mycobacterial peptides to HLA-E-restricted CD8-positive T cells eliciting both cytotoxic and immunoregulatory functions. In terms of biological role, (Microbial infection) Viruses like human cytomegalovirus have evolved an escape mechanism whereby virus-induced down-regulation of host MHC class I molecules is coupled to the binding of viral peptides to HLA-E, restoring HLA-E expression and inducing HLA-E-dependent NK cell immune tolerance to infected cells. Its function is as follows. (Microbial infection) May bind HIV-1 gag/Capsid protein p24-derived peptide (AISPRTLNA) on infected cells and may inhibit NK cell cytotoxicity, a mechanism that allows HIV-1 to escape immune recognition. (Microbial infection) Upon SARS-CoV-2 infection, may contribute to functional exhaustion of cytotoxic NK cells and CD8-positive T cells. Binds SARS-CoV-2 S/Spike protein S1-derived peptide (LQPRTFLL) expressed on the surface of lung epithelial cells, inducing NK cell exhaustion and dampening of antiviral immune surveillance. In Homo sapiens (Human), this protein is HLA class I histocompatibility antigen, alpha chain E.